Consider the following 62-residue polypeptide: Synergistic-type venom protein S2C4 (62 aa).

Intrachain disulfides connect Cys-3/Cys-24, Cys-17/Cys-42, and Cys-46/Cys-57.

It belongs to the three-finger toxin family. Short-chain subfamily. Aminergic toxin sub-subfamily. As to quaternary structure, homodimer; disulfide-linked. As to expression, expressed by the venom gland.

The protein localises to the secreted. Functionally, this protein shows a synergetic toxic effect in that it enhances the toxicity of other toxins. This chain is Synergistic-type venom protein S2C4, found in Dendroaspis jamesoni kaimosae (Eastern Jameson's mamba).